Here is a 318-residue protein sequence, read N- to C-terminus: Actin-related protein 2/3 complex subunit 2A (318 aa).

The segment at 297–318 (RSMNNKSFKRLGLNEVNHTNSK) is disordered.

It belongs to the ARPC2 family. In terms of assembly, component of the Arp2/3 complex composed of ARP2, ARP3, ARPC1/p41-ARC, ARPC2/p34-ARC, ARPC3/p21-ARC, ARPC4/p20-ARC and ARPC5/p16-ARC. Interacts with ARPC4. Expressed at low levels in all tissues with a relatively highest expression in inflorescences.

It localises to the cytoplasm. The protein resides in the cytoskeleton. The protein localises to the cell projection. Functionally, functions as actin-binding component of the Arp2/3 complex which is involved in regulation of actin polymerization and together with an activating nucleation-promoting factor (NPF) mediates the formation of branched actin networks. Seems to contact the mother actin filament. Arp2/3 complex plays a critical role in the control of cell morphogenesis via the modulation of cell polarity development. The chain is Actin-related protein 2/3 complex subunit 2A (ARPC2A) from Arabidopsis thaliana (Mouse-ear cress).